Here is a 186-residue protein sequence, read N- to C-terminus: Peptide deformylase (186 aa).

Fe cation is bound by residues C113 and H156. Residue E157 is part of the active site. A Fe cation-binding site is contributed by H160.

The protein belongs to the polypeptide deformylase family. The cofactor is Fe(2+).

The catalysed reaction is N-terminal N-formyl-L-methionyl-[peptide] + H2O = N-terminal L-methionyl-[peptide] + formate. Removes the formyl group from the N-terminal Met of newly synthesized proteins. Requires at least a dipeptide for an efficient rate of reaction. N-terminal L-methionine is a prerequisite for activity but the enzyme has broad specificity at other positions. The protein is Peptide deformylase of Ligilactobacillus salivarius (strain UCC118) (Lactobacillus salivarius).